Consider the following 285-residue polypeptide: Putative sugar uptake protein lmo0169 (285 aa).

A run of 10 helical transmembrane segments spans residues 5–24 (IALI…SKIG), 31–48 (IIGT…VFIF), 53–71 (YTAT…WSLG), 84–106 (VSKT…GVFA), 116–135 (LVLG…LTSY), 151–173 (IITL…WFDI), 178–195 (AILP…LFSI), 207–226 (WLNM…LLFS), 232–254 (IATG…ILFL), and 263–282 (LILV…MIGI).

The protein belongs to the GRP transporter (TC 2.A.7.5) family.

The protein localises to the cell membrane. In Listeria monocytogenes serovar 1/2a (strain ATCC BAA-679 / EGD-e), this protein is Putative sugar uptake protein lmo0169.